Reading from the N-terminus, the 108-residue chain is MTTGQEAEQLARTYLEKQGLEYVAHNVRYPFGELDLVMRHQDFWVFVEVKFRTNTQFGGALQAIRPKQIQRIRKAANHYLQLNKINAPCRFDVLAIDGLQINWLQGCF.

Belongs to the UPF0102 family.

The protein is UPF0102 protein Sden_0272 of Shewanella denitrificans (strain OS217 / ATCC BAA-1090 / DSM 15013).